Reading from the N-terminus, the 155-residue chain is Small ribosomal subunit protein uS7 (155 aa).

Belongs to the universal ribosomal protein uS7 family. In terms of assembly, part of the 30S ribosomal subunit. Contacts proteins S9 and S11.

In terms of biological role, one of the primary rRNA binding proteins, it binds directly to 16S rRNA where it nucleates assembly of the head domain of the 30S subunit. Is located at the subunit interface close to the decoding center, probably blocks exit of the E-site tRNA. This chain is Small ribosomal subunit protein uS7, found in Xanthomonas axonopodis pv. citri (strain 306).